Reading from the N-terminus, the 78-residue chain is Small ribosomal subunit protein uS17 (78 aa).

The protein belongs to the universal ribosomal protein uS17 family. Part of the 30S ribosomal subunit.

Functionally, one of the primary rRNA binding proteins, it binds specifically to the 5'-end of 16S ribosomal RNA. The sequence is that of Small ribosomal subunit protein uS17 from Parvibaculum lavamentivorans (strain DS-1 / DSM 13023 / NCIMB 13966).